The sequence spans 388 residues: MNRTTNLVYAGTFAGTLLALSLWSLKGAAGFSTADNTPVLNGKLALAFEKHYDEEFPIKKLGTNLWAALDYTLFGEGRPGVVIGANQWLFSDEEFKPTAAASQNITDNQALIQGVRETLARNNVQLVMAILPAKARLYPENFGEQQPASLHEQLYQNFRRIVADAGIQAPDLLGPLQQAKAGGQVFLRTDTHWTPYGAQVVAGQLATTIKPIGVLPESGNVYVTETLPGGPHKGDLTNFLPLDPLFEELLPPPDQLAKHNTRQQEESAPAGDDLFAETQVPVALVGTSYSADERWNFAGALRQALGSDLVNFAEDGRGPLLPMLKFLQSEDFKKSPPRLVIWEFPERYLPMAYDLSEFDADWIAQLKAAGRQDKQLADNTATNQGARH.

The signal sequence occupies residues 1–29 (MNRTTNLVYAGTFAGTLLALSLWSLKGAA). Aspartate 190 is an active-site residue. Catalysis depends on histidine 192, which acts as the Proton acceptor. Serine 288 functions as the Nucleophile in the catalytic mechanism.

This sequence belongs to the AlgJ family.

The protein localises to the cell inner membrane. It localises to the periplasm. It functions in the pathway glycan biosynthesis; alginate biosynthesis. In terms of biological role, together with AlgI and AlgF, forms an inner membrane complex which probably interacts with the alginate polymerization-transport complex and adds acetyl groups at the O-2 and O-3 positions of mannuronate residues. Acetylation of alginate increases cyst resistance to desiccation. The chain is Probable alginate O-acetylase AlgJ (algJ) from Azotobacter vinelandii.